A 218-amino-acid polypeptide reads, in one-letter code: Probable glutamine ABC transporter permease protein GlnP (218 aa).

The next 3 membrane-spanning stretches (helical) occupy residues 19-39, 65-85, and 188-208; these read FLVTLYVAFISIILSFFFGLI, LPLLLIIFFTFFALPEIGIKL, and FFPIFLLAALMYFAVNYSLSL. The region spanning 19–210 is the ABC transmembrane type-1 domain; it reads FLVTLYVAFI…AVNYSLSLAA (192 aa).

It belongs to the binding-protein-dependent transport system permease family. In terms of assembly, the complex is composed of two ATP-binding proteins (GlnQ), two transmembrane proteins (GlnM and GlnP) and a solute-binding protein (GlnH).

It is found in the cell membrane. Its function is as follows. Part of the ABC transporter complex GlnHMPQ involved in glutamine transport. Probably responsible for the translocation of the substrate across the membrane. The polypeptide is Probable glutamine ABC transporter permease protein GlnP (glnP) (Bacillus subtilis (strain 168)).